Here is a 97-residue protein sequence, read N- to C-terminus: Protein YukE (97 aa).

The stretch at 21 to 94 forms a coiled coil; that stretch reads VESQEVLNQV…ESTDQDIANQ (74 aa).

Belongs to the WXG100 family. sagEsxA-like subfamily. Homodimer.

It localises to the secreted. In terms of biological role, required to deliver LXG toxins to target cells. The chain is Protein YukE (yukE) from Bacillus subtilis (strain 168).